An 868-amino-acid polypeptide reads, in one-letter code: LPS-assembly protein LptD (868 aa).

The N-terminal stretch at 1–24 (MLKGIHKYLLMCFGTVLFTVQANA) is a signal peptide.

The protein belongs to the LptD family. In terms of assembly, component of the lipopolysaccharide transport and assembly complex. Interacts with LptE and LptA.

The protein localises to the cell outer membrane. In terms of biological role, together with LptE, is involved in the assembly of lipopolysaccharide (LPS) at the surface of the outer membrane. This Francisella tularensis subsp. novicida (strain U112) protein is LPS-assembly protein LptD.